The sequence spans 245 residues: rRNA adenine N-6-methyltransferase (245 aa).

S-adenosyl-L-methionine contacts are provided by Asn-10, Leu-12, Gly-37, Glu-58, Asp-83, and Ser-100.

It belongs to the class I-like SAM-binding methyltransferase superfamily. rRNA adenine N(6)-methyltransferase family.

It carries out the reaction adenosine(2085) in 23S rRNA + 2 S-adenosyl-L-methionine = N(6)-dimethyladenosine(2085) in 23S rRNA + 2 S-adenosyl-L-homocysteine + 2 H(+). In terms of biological role, this protein produces a dimethylation of the adenine residue at position 2085 in 23S rRNA, resulting in reduced affinity between ribosomes and macrolide-lincosamide-streptogramin B antibiotics. This chain is rRNA adenine N-6-methyltransferase (ermBP), found in Clostridium perfringens.